We begin with the raw amino-acid sequence, 1913 residues long: GREB1-like protein (1913 aa).

Acidic residues predominate over residues 86–96; the sequence is MEDDEDEEEMS. Disordered regions lie at residues 86 to 111, 281 to 309, 1097 to 1157, and 1179 to 1207; these read MEDD…KPAP, NGTS…SPRP, EAER…TSSI, and DSLD…LAWS. A compositionally biased stretch (low complexity) spans 289–301; the sequence is KSSSCSSTPSRPG. Residues 1118–1157 show a composition bias toward polar residues; it reads PQSNSSAVTGTSGSIMENGVSSSSTAGKPQQQLLTPTSSI. Residues 1187–1200 show a composition bias toward low complexity; the sequence is SSTTSKPSSSSSSS. A helical membrane pass occupies residues 1832-1852; sequence GVFFSGLLLYLCDSFVGADLL.

It belongs to the GREB1 family. In terms of tissue distribution, expressed in the inner ear, with a high presence in the spiral ganglia, cochlear nerve bundles, and hair cells.

The protein resides in the membrane. Plays a major role in early metanephros and genital development. In Mus musculus (Mouse), this protein is GREB1-like protein (Greb1l).